We begin with the raw amino-acid sequence, 727 residues long: NHL repeat-containing protein 2 (727 aa).

The Thioredoxin domain occupies Arg43–Gln198. NHL repeat units follow at residues Lys207–Asn249, Asn260–Glu302, Ile330–Leu364, Phe404–Ile434, Ala456–Lys500, and Ala513–Glu557.

As to quaternary structure, monomer.

The protein resides in the cytoplasm. It localises to the cytosol. Its function is as follows. Required for normal embryonic development. The chain is NHL repeat-containing protein 2 (NHLRC2) from Gallus gallus (Chicken).